The sequence spans 569 residues: ATP-dependent RNA helicase dhh1 (569 aa).

The segment covering M1–S16 has biased composition (polar residues). Residues M1–V39 are disordered. A Q motif motif is present at residues L45–E73. Residues I76–I246 form the Helicase ATP-binding domain. A89–T96 contributes to the ATP binding site. A DEAD box motif is present at residues D194–D197. The 161-residue stretch at G256–L416 folds into the Helicase C-terminal domain. The interval A436–Q569 is disordered. The span at Q437–Q482 shows a compositional bias: low complexity. Residues G495 to Q520 are compositionally biased toward polar residues. Positions S529–G542 are enriched in gly residues. Residues R543–Q569 are compositionally biased toward low complexity.

It belongs to the DEAD box helicase family. DDX6/DHH1 subfamily.

The protein resides in the cytoplasm. Its subcellular location is the P-body. The enzyme catalyses ATP + H2O = ADP + phosphate + H(+). Functionally, ATP-dependent RNA helicase involved in mRNA turnover, and more specifically in mRNA decapping. Is involved in G1/S DNA-damage checkpoint recovery, probably through the regulation of the translational status of a subset of mRNAs. May also have a role in translation and mRNA nuclear export. The sequence is that of ATP-dependent RNA helicase dhh1 (drh-10) from Neurospora crassa (strain ATCC 24698 / 74-OR23-1A / CBS 708.71 / DSM 1257 / FGSC 987).